Consider the following 199-residue polypeptide: Translation initiation factor IF-3 (199 aa).

Belongs to the IF-3 family. In terms of assembly, monomer.

The protein localises to the cytoplasm. In terms of biological role, IF-3 binds to the 30S ribosomal subunit and shifts the equilibrium between 70S ribosomes and their 50S and 30S subunits in favor of the free subunits, thus enhancing the availability of 30S subunits on which protein synthesis initiation begins. The chain is Translation initiation factor IF-3 from Gloeobacter violaceus (strain ATCC 29082 / PCC 7421).